Reading from the N-terminus, the 288-residue chain is Pyridoxal kinase PdxY (288 aa).

Substrate is bound by residues Ser-12 and 47 to 48; that span reads TQ. Residues Asp-114, Glu-151, Lys-184, and 211 to 214 contribute to the ATP site; that span reads RPLL. Residue Asp-225 coordinates substrate.

It belongs to the pyridoxine kinase family. PdxY subfamily. As to quaternary structure, homodimer. It depends on Mg(2+) as a cofactor.

The catalysed reaction is pyridoxal + ATP = pyridoxal 5'-phosphate + ADP + H(+). The protein operates within cofactor metabolism; pyridoxal 5'-phosphate salvage; pyridoxal 5'-phosphate from pyridoxal: step 1/1. Its function is as follows. Pyridoxal kinase involved in the salvage pathway of pyridoxal 5'-phosphate (PLP). Catalyzes the phosphorylation of pyridoxal to PLP. The protein is Pyridoxal kinase PdxY of Pseudomonas paraeruginosa (strain DSM 24068 / PA7) (Pseudomonas aeruginosa (strain PA7)).